A 523-amino-acid chain; its full sequence is 2-isopropylmalate synthase (523 aa).

Positions 5–267 (VIIFDTTLRD…HTRINHQEIW (263 aa)) constitute a Pyruvate carboxyltransferase domain. Mn(2+) contacts are provided by Asp14, His202, His204, and Asn238. The tract at residues 392-523 (RLEYFSVQSG…QNKEHNQETV (132 aa)) is regulatory domain.

It belongs to the alpha-IPM synthase/homocitrate synthase family. LeuA type 1 subfamily. Homodimer. Mn(2+) is required as a cofactor.

It localises to the cytoplasm. It carries out the reaction 3-methyl-2-oxobutanoate + acetyl-CoA + H2O = (2S)-2-isopropylmalate + CoA + H(+). It functions in the pathway amino-acid biosynthesis; L-leucine biosynthesis; L-leucine from 3-methyl-2-oxobutanoate: step 1/4. Catalyzes the condensation of the acetyl group of acetyl-CoA with 3-methyl-2-oxobutanoate (2-ketoisovalerate) to form 3-carboxy-3-hydroxy-4-methylpentanoate (2-isopropylmalate). This is 2-isopropylmalate synthase from Cronobacter sakazakii (strain ATCC BAA-894) (Enterobacter sakazakii).